A 721-amino-acid chain; its full sequence is 1,4-alpha-glucan branching enzyme GlgB (721 aa).

Catalysis depends on D404, which acts as the Nucleophile. E457 (proton donor) is an active-site residue.

It belongs to the glycosyl hydrolase 13 family. GlgB subfamily. Monomer.

It carries out the reaction Transfers a segment of a (1-&gt;4)-alpha-D-glucan chain to a primary hydroxy group in a similar glucan chain.. It functions in the pathway glycan biosynthesis; glycogen biosynthesis. In terms of biological role, catalyzes the formation of the alpha-1,6-glucosidic linkages in glycogen by scission of a 1,4-alpha-linked oligosaccharide from growing alpha-1,4-glucan chains and the subsequent attachment of the oligosaccharide to the alpha-1,6 position. The chain is 1,4-alpha-glucan branching enzyme GlgB from Novosphingobium aromaticivorans (strain ATCC 700278 / DSM 12444 / CCUG 56034 / CIP 105152 / NBRC 16084 / F199).